The following is a 236-amino-acid chain: Flagellar L-ring protein (236 aa).

The signal sequence occupies residues 1 to 16 (MRMRITAILAAGLLAG). Cys-17 is lipidated: N-palmitoyl cysteine. Cys-17 carries S-diacylglycerol cysteine lipidation. Positions 96-143 (ENETDRSRKNSSGFNLGASGESQTSDFAWSGDLEYGSNTKTEGDGKTE) are disordered. Over residues 105–122 (NSSGFNLGASGESQTSDF) the composition is skewed to polar residues.

Belongs to the FlgH family. As to quaternary structure, the basal body constitutes a major portion of the flagellar organelle and consists of four rings (L,P,S, and M) mounted on a central rod.

Its subcellular location is the cell outer membrane. It localises to the bacterial flagellum basal body. Assembles around the rod to form the L-ring and probably protects the motor/basal body from shearing forces during rotation. In Sinorhizobium medicae (strain WSM419) (Ensifer medicae), this protein is Flagellar L-ring protein.